Reading from the N-terminus, the 158-residue chain is SsrA-binding protein (158 aa).

Belongs to the SmpB family.

It is found in the cytoplasm. Required for rescue of stalled ribosomes mediated by trans-translation. Binds to transfer-messenger RNA (tmRNA), required for stable association of tmRNA with ribosomes. tmRNA and SmpB together mimic tRNA shape, replacing the anticodon stem-loop with SmpB. tmRNA is encoded by the ssrA gene; the 2 termini fold to resemble tRNA(Ala) and it encodes a 'tag peptide', a short internal open reading frame. During trans-translation Ala-aminoacylated tmRNA acts like a tRNA, entering the A-site of stalled ribosomes, displacing the stalled mRNA. The ribosome then switches to translate the ORF on the tmRNA; the nascent peptide is terminated with the 'tag peptide' encoded by the tmRNA and targeted for degradation. The ribosome is freed to recommence translation, which seems to be the essential function of trans-translation. The protein is SsrA-binding protein of Caldicellulosiruptor saccharolyticus (strain ATCC 43494 / DSM 8903 / Tp8T 6331).